Here is a 135-residue protein sequence, read N- to C-terminus: Cytochrome c2 (135 aa).

Positions 1-23 (MKKGFLAAGVFAAVAFASGAALA) are cleaved as a signal peptide. Heme c contacts are provided by C37, C40, H41, and M114.

The protein belongs to the cytochrome c family. Post-translationally, binds 1 heme c group covalently per subunit.

Cytochrome c2 is found mainly in purple, non-sulfur, photosynthetic bacteria where it functions as the electron donor to the oxidized bacteriochlorophyll in the photophosphorylation pathway. However, it may also have a role in the respiratory chain and is found in some non-photosynthetic bacteria. This is Cytochrome c2 (cycA) from Rhodospirillum rubrum (strain ATCC 11170 / ATH 1.1.1 / DSM 467 / LMG 4362 / NCIMB 8255 / S1).